Here is a 439-residue protein sequence, read N- to C-terminus: Ribosomal protein uS12 methylthiotransferase RimO (439 aa).

In terms of domain architecture, MTTase N-terminal spans 4–114 (PKVGFVSLGR…VVRAVHGVAP (111 aa)). The region spanning 133 to 370 (LTPRHYAYLK…MEHQQAISTA (238 aa)) is the Radical SAM core domain. [4Fe-4S] cluster-binding residues include cysteine 147, cysteine 151, and cysteine 154. Residues 373–439 (STRVGREIDV…EYDLWGERIA (67 aa)) enclose the TRAM domain.

It belongs to the methylthiotransferase family. RimO subfamily. The cofactor is [4Fe-4S] cluster.

The protein resides in the cytoplasm. It carries out the reaction L-aspartate(89)-[ribosomal protein uS12]-hydrogen + (sulfur carrier)-SH + AH2 + 2 S-adenosyl-L-methionine = 3-methylsulfanyl-L-aspartate(89)-[ribosomal protein uS12]-hydrogen + (sulfur carrier)-H + 5'-deoxyadenosine + L-methionine + A + S-adenosyl-L-homocysteine + 2 H(+). Its function is as follows. Catalyzes the methylthiolation of an aspartic acid residue of ribosomal protein uS12. This is Ribosomal protein uS12 methylthiotransferase RimO from Bordetella bronchiseptica (strain ATCC BAA-588 / NCTC 13252 / RB50) (Alcaligenes bronchisepticus).